We begin with the raw amino-acid sequence, 94 residues long: Acylphosphatase (94 aa).

Residues 3–90 (RVHVIVEGRV…SDEKQFRIMY (88 aa)) enclose the Acylphosphatase-like domain. Catalysis depends on residues Arg-18 and Asn-36.

It belongs to the acylphosphatase family.

The enzyme catalyses an acyl phosphate + H2O = a carboxylate + phosphate + H(+). The sequence is that of Acylphosphatase (acyP) from Geobacillus kaustophilus (strain HTA426).